We begin with the raw amino-acid sequence, 319 residues long: 4-diphosphocytidyl-2-C-methyl-D-erythritol kinase (319 aa).

Residue Lys-18 is part of the active site. Pro-103–Thr-113 provides a ligand contact to ATP. Residue Asp-145 is part of the active site.

The protein belongs to the GHMP kinase family. IspE subfamily.

The catalysed reaction is 4-CDP-2-C-methyl-D-erythritol + ATP = 4-CDP-2-C-methyl-D-erythritol 2-phosphate + ADP + H(+). It participates in isoprenoid biosynthesis; isopentenyl diphosphate biosynthesis via DXP pathway; isopentenyl diphosphate from 1-deoxy-D-xylulose 5-phosphate: step 3/6. Its function is as follows. Catalyzes the phosphorylation of the position 2 hydroxy group of 4-diphosphocytidyl-2C-methyl-D-erythritol. In Prochlorococcus marinus (strain NATL1A), this protein is 4-diphosphocytidyl-2-C-methyl-D-erythritol kinase.